A 256-amino-acid chain; its full sequence is Trypsin, alkaline B (256 aa).

The N-terminal stretch at 1-17 is a signal peptide; it reads MRLFLALLALGFAAVAA. A propeptide spans 18–24 (activation peptide); sequence VPANPQR. The region spanning 25 to 256 is the Peptidase S1 domain; sequence IVGGSTTTIQ…RFANWIRNNS (232 aa). Cysteine 55 and cysteine 71 form a disulfide bridge. Active-site charge relay system residues include histidine 70 and aspartate 115. Cystine bridges form between cysteine 180–cysteine 197 and cysteine 209–cysteine 233. Serine 213 serves as the catalytic Charge relay system.

It belongs to the peptidase S1 family. In terms of tissue distribution, midgut.

The protein resides in the secreted. It is found in the extracellular space. The catalysed reaction is Preferential cleavage: Arg-|-Xaa, Lys-|-Xaa.. The polypeptide is Trypsin, alkaline B (Manduca sexta (Tobacco hawkmoth)).